We begin with the raw amino-acid sequence, 431 residues long: GTPase Obg (431 aa).

Residues methionine 1 to leucine 158 form the Obg domain. Residues alanine 159–aspartate 335 enclose the OBG-type G domain. Residues glycine 165–serine 172, phenylalanine 190–valine 194, aspartate 212–glycine 215, threonine 282–aspartate 285, and serine 316–isoleucine 318 contribute to the GTP site. Residues serine 172 and threonine 192 each contribute to the Mg(2+) site. One can recognise an OCT domain in the interval tyrosine 353–aspartate 431.

Belongs to the TRAFAC class OBG-HflX-like GTPase superfamily. OBG GTPase family. In terms of assembly, monomer. Mg(2+) serves as cofactor.

It localises to the cytoplasm. In terms of biological role, an essential GTPase which binds GTP, GDP and possibly (p)ppGpp with moderate affinity, with high nucleotide exchange rates and a fairly low GTP hydrolysis rate. Plays a role in control of the cell cycle, stress response, ribosome biogenesis and in those bacteria that undergo differentiation, in morphogenesis control. This is GTPase Obg from Lactiplantibacillus plantarum (strain ATCC BAA-793 / NCIMB 8826 / WCFS1) (Lactobacillus plantarum).